We begin with the raw amino-acid sequence, 335 residues long: Urokinase plasminogen activator surface receptor (335 aa).

Positions 1–22 (MGHPLLLPLLLLLHTCVPASWG) are cleaved as a signal peptide. 3 consecutive UPAR/Ly6 domains span residues 23-114 (LRCM…RSRY), 115-213 (LECI…PQNG), and 214-305 (HQCY…YRKG). 3 disulfide bridges follow: Cys-25–Cys-46, Cys-28–Cys-34, and Cys-39–Cys-67. N-linked (GlcNAc...) asparagine glycosylation occurs at Asn-74. Disulfide bonds link Cys-93-Cys-98, Cys-117-Cys-144, Cys-120-Cys-127, Cys-137-Cys-169, Cys-175-Cys-192, Cys-193-Cys-198, Cys-216-Cys-244, Cys-219-Cys-227, Cys-237-Cys-263, Cys-269-Cys-287, and Cys-288-Cys-293. N-linked (GlcNAc...) asparagine glycans are attached at residues Asn-184, Asn-194, Asn-222, and Asn-255. A lipid anchor (GPI-anchor amidated glycine) is attached at Gly-305. A propeptide spans 306–335 (AAPQPGPAHLSLTITLLMTARLWGGTLLWT) (removed in mature form).

As to quaternary structure, monomer. Interacts (via the UPAR/Ly6 domains) with SRPX2. Interacts with MRC2. Interacts with FAP (seprase); the interaction occurs at the cell surface of invadopodia membrane. Interacts with SORL1 (via N-terminal ectodomain); this interaction decreases PLAUR internalization. The ternary complex composed of PLAUR-PLAU-SERPINE1 also interacts with SORL1.

Its subcellular location is the cell membrane. The protein resides in the cell projection. It localises to the invadopodium membrane. Its function is as follows. Acts as a receptor for urokinase plasminogen activator. Plays a role in localizing and promoting plasmin formation. Mediates the proteolysis-independent signal transduction activation effects of U-PA. It is subject to negative-feedback regulation by U-PA which cleaves it into an inactive form. In Chlorocebus aethiops (Green monkey), this protein is Urokinase plasminogen activator surface receptor (PLAUR).